The sequence spans 328 residues: L-lactate dehydrogenase (328 aa).

Residues Val18, Glu39, Lys46, Tyr71, and 85-86 (GA) each bind NAD(+). The substrate site is built by Gln88 and Arg94. Residues Ser107, 124–126 (AAN), and Ser149 each bind NAD(+). 126–129 (NPVD) provides a ligand contact to substrate. 154–157 (DSAR) contributes to the substrate binding site. Positions 159 and 174 each coordinate beta-D-fructose 1,6-bisphosphate. His181 serves as the catalytic Proton acceptor. The residue at position 226 (Tyr226) is a Phosphotyrosine. Thr235 is a binding site for substrate.

It belongs to the LDH/MDH superfamily. LDH family. Homotetramer.

The protein resides in the cytoplasm. It catalyses the reaction (S)-lactate + NAD(+) = pyruvate + NADH + H(+). Its pathway is fermentation; pyruvate fermentation to lactate; (S)-lactate from pyruvate: step 1/1. Its activity is regulated as follows. Allosterically activated by fructose 1,6-bisphosphate (FBP). In terms of biological role, catalyzes the conversion of lactate to pyruvate. The protein is L-lactate dehydrogenase of Streptococcus sanguinis (strain SK36).